The primary structure comprises 103 residues: QPKVAPTITLFPPSKEELNEATKATLVCLINDFYPSPVTVDWVIDGSTRSGETTAPQRQSNSQYMASSYLSLSASDWSSHETYTCRVTHNGTSITKTLKRSEC.

The Ig-like domain maps to 6–99; it reads PTITLFPPSK…NGTSITKTLK (94 aa). A disulfide bridge connects residues C28 and C85.

The chain is Ig lambda chain C region from Gallus gallus (Chicken).